The sequence spans 283 residues: Diaminopimelate epimerase (283 aa).

Residues Asn-13 and Asn-65 each contribute to the substrate site. Cys-74 acts as the Proton donor in catalysis. Substrate-binding positions include 75–76, Asn-196, and 214–215; these read GN and ER. The active-site Proton acceptor is the Cys-223. 224–225 lines the substrate pocket; sequence GT.

It belongs to the diaminopimelate epimerase family. In terms of assembly, homodimer.

It localises to the cytoplasm. The catalysed reaction is (2S,6S)-2,6-diaminopimelate = meso-2,6-diaminopimelate. Its pathway is amino-acid biosynthesis; L-lysine biosynthesis via DAP pathway; DL-2,6-diaminopimelate from LL-2,6-diaminopimelate: step 1/1. Catalyzes the stereoinversion of LL-2,6-diaminopimelate (L,L-DAP) to meso-diaminopimelate (meso-DAP), a precursor of L-lysine and an essential component of the bacterial peptidoglycan. The sequence is that of Diaminopimelate epimerase from Alkaliphilus metalliredigens (strain QYMF).